We begin with the raw amino-acid sequence, 62 residues long: Guanine nucleotide-binding protein subunit gamma (62 aa).

Cys59 carries the post-translational modification Cysteine methyl ester. Cys59 is lipidated: S-geranylgeranyl cysteine. A propeptide spans 60–62 (removed in mature form); sequence SVL.

The protein belongs to the G protein gamma family. G proteins are composed of 3 units, alpha, beta and gamma. Interacts with gpb-1 and gpb-2.

It localises to the cell membrane. In terms of biological role, guanine nucleotide-binding proteins (G proteins) are involved as a modulator or transducer in various transmembrane signaling systems. The beta and gamma chains are required for the GTPase activity, for replacement of GDP by GTP, and for G protein-effector interaction. The polypeptide is Guanine nucleotide-binding protein subunit gamma (gpc-1) (Caenorhabditis briggsae).